The primary structure comprises 128 residues: MAAIHKIGRRKCAVARVYVSEGTGVITVNKKAFATYFPTATLQYKVLQPMSMTENVTNYDVKVNVYGGGSTGQAEAVRMALARVMCEVGEGNRAILKPEGLLTRDPRMVERKKFGQKKARKRFQFSKR.

It belongs to the universal ribosomal protein uS9 family.

This chain is Small ribosomal subunit protein uS9, found in Flavobacterium psychrophilum (strain ATCC 49511 / DSM 21280 / CIP 103535 / JIP02/86).